The primary structure comprises 96 residues: Co-chaperonin GroES (96 aa).

It belongs to the GroES chaperonin family. In terms of assembly, heptamer of 7 subunits arranged in a ring. Interacts with the chaperonin GroEL.

It localises to the cytoplasm. Its function is as follows. Together with the chaperonin GroEL, plays an essential role in assisting protein folding. The GroEL-GroES system forms a nano-cage that allows encapsulation of the non-native substrate proteins and provides a physical environment optimized to promote and accelerate protein folding. GroES binds to the apical surface of the GroEL ring, thereby capping the opening of the GroEL channel. In Shewanella amazonensis (strain ATCC BAA-1098 / SB2B), this protein is Co-chaperonin GroES.